Reading from the N-terminus, the 706-residue chain is Transferrin-binding protein B (706 aa).

Positions 1–20 (MKHIPLTTLCVAISAVLLTA) are cleaved as a signal peptide. Cysteine 21 carries N-palmitoyl cysteine lipidation. Residue cysteine 21 is the site of S-diacylglycerol cysteine attachment. Disordered stretches follow at residues 26-92 (GSNP…KEQV) and 384-412 (GSAI…LEGG). Positions 42-51 (GNTGNTGNAG) are enriched in gly residues. The span at 389–410 (SDKEKDSETKHPFTSDAKDRLE) shows a compositional bias: basic and acidic residues.

The protein belongs to the TbpB family.

The protein resides in the cell outer membrane. Its subcellular location is the cell surface. In terms of biological role, moraxella acquires iron by extracting it from serum transferrin (TF) in its human host. Acts as a transferrin receptor and is required for transferrin utilization. This chain is Transferrin-binding protein B, found in Moraxella catarrhalis (Branhamella catarrhalis).